A 916-amino-acid chain; its full sequence is Protein translocase subunit SecA (916 aa).

ATP contacts are provided by residues glutamine 87, 105 to 109 (GEGKT), and aspartate 507. 4 residues coordinate Zn(2+): cysteine 900, cysteine 902, cysteine 911, and histidine 912.

The protein belongs to the SecA family. Monomer and homodimer. Part of the essential Sec protein translocation apparatus which comprises SecA, SecYEG and auxiliary proteins SecDF-YajC and YidC. Zn(2+) serves as cofactor.

Its subcellular location is the cell inner membrane. It is found in the cytoplasm. The enzyme catalyses ATP + H2O + cellular proteinSide 1 = ADP + phosphate + cellular proteinSide 2.. Functionally, part of the Sec protein translocase complex. Interacts with the SecYEG preprotein conducting channel. Has a central role in coupling the hydrolysis of ATP to the transfer of proteins into and across the cell membrane, serving both as a receptor for the preprotein-SecB complex and as an ATP-driven molecular motor driving the stepwise translocation of polypeptide chains across the membrane. This Neisseria gonorrhoeae (strain NCCP11945) protein is Protein translocase subunit SecA.